Reading from the N-terminus, the 90-residue chain is Small ribosomal subunit protein uS17 (90 aa).

This sequence belongs to the universal ribosomal protein uS17 family. As to quaternary structure, part of the 30S ribosomal subunit.

Its function is as follows. One of the primary rRNA binding proteins, it binds specifically to the 5'-end of 16S ribosomal RNA. The sequence is that of Small ribosomal subunit protein uS17 from Burkholderia ambifaria (strain ATCC BAA-244 / DSM 16087 / CCUG 44356 / LMG 19182 / AMMD) (Burkholderia cepacia (strain AMMD)).